Reading from the N-terminus, the 779-residue chain is Endonuclease MutS2 (779 aa).

Position 328 to 335 (328 to 335 (GPNTGGKT)) interacts with ATP. The Smr domain occupies 704–779 (LDLRGKRYEE…GSGATIVTLG (76 aa)).

This sequence belongs to the DNA mismatch repair MutS family. MutS2 subfamily. Homodimer. Binds to stalled ribosomes, contacting rRNA.

In terms of biological role, endonuclease that is involved in the suppression of homologous recombination and thus may have a key role in the control of bacterial genetic diversity. Functionally, acts as a ribosome collision sensor, splitting the ribosome into its 2 subunits. Detects stalled/collided 70S ribosomes which it binds and splits by an ATP-hydrolysis driven conformational change. Acts upstream of the ribosome quality control system (RQC), a ribosome-associated complex that mediates the extraction of incompletely synthesized nascent chains from stalled ribosomes and their subsequent degradation. Probably generates substrates for RQC. This chain is Endonuclease MutS2, found in Streptococcus pyogenes serotype M5 (strain Manfredo).